Consider the following 108-residue polypeptide: ATP synthase peripheral stalk subunit F6, mitochondrial (108 aa).

The N-terminal 32 residues, 1-32 (MILQRLFRFSSVIRSAVSVHLRRNIGVTAVAF), are a transit peptide targeting the mitochondrion. Residues lysine 41 and lysine 46 each carry the N6-acetyllysine modification. A Phosphoserine modification is found at serine 65. An N6-acetyllysine modification is found at lysine 79. An N6-acetyllysine; alternate mark is found at lysine 94 and lysine 99. 2 positions are modified to N6-succinyllysine; alternate: lysine 94 and lysine 99. At lysine 105 the chain carries N6-acetyllysine.

The protein belongs to the eukaryotic ATPase subunit F6 family. In terms of assembly, component of the ATP synthase complex composed at least of ATP5F1A/subunit alpha, ATP5F1B/subunit beta, ATP5MC1/subunit c (homooctomer), MT-ATP6/subunit a, MT-ATP8/subunit 8, ATP5ME/subunit e, ATP5MF/subunit f, ATP5MG/subunit g, ATP5MK/subunit k, ATP5MJ/subunit j, ATP5F1C/subunit gamma, ATP5F1D/subunit delta, ATP5F1E/subunit epsilon, ATP5PF/subunit F6, ATP5PB/subunit b, ATP5PD/subunit d, ATP5PO/subunit OSCP. ATP synthase complex consists of a soluble F(1) head domain (subunits alpha(3) and beta(3)) - the catalytic core - and a membrane F(0) domain - the membrane proton channel (subunits c, a, 8, e, f, g, k and j). These two domains are linked by a central stalk (subunits gamma, delta, and epsilon) rotating inside the F1 region and a stationary peripheral stalk (subunits F6, b, d, and OSCP).

It localises to the mitochondrion. It is found in the mitochondrion inner membrane. Functionally, subunit F6, of the mitochondrial membrane ATP synthase complex (F(1)F(0) ATP synthase or Complex V) that produces ATP from ADP in the presence of a proton gradient across the membrane which is generated by electron transport complexes of the respiratory chain. ATP synthase complex consist of a soluble F(1) head domain - the catalytic core - and a membrane F(1) domain - the membrane proton channel. These two domains are linked by a central stalk rotating inside the F(1) region and a stationary peripheral stalk. During catalysis, ATP synthesis in the catalytic domain of F(1) is coupled via a rotary mechanism of the central stalk subunits to proton translocation. In vivo, can only synthesize ATP although its ATP hydrolase activity can be activated artificially in vitro. Part of the complex F(0) domain. Part of the complex F(0) domain and the peripheric stalk, which acts as a stator to hold the catalytic alpha(3)beta(3) subcomplex and subunit a/ATP6 static relative to the rotary elements. The polypeptide is ATP synthase peripheral stalk subunit F6, mitochondrial (Homo sapiens (Human)).